Reading from the N-terminus, the 274-residue chain is Phosphatidylglycerol--prolipoprotein diacylglyceryl transferase (274 aa).

4 consecutive transmembrane segments (helical) span residues 19-39 (VGSVVIRWYGVLIAAAIVLGL), 59-79 (LAIWLVIGAIPCARLYYVLFQ), 93-113 (IWRGGIAIHGAILGGMLAALI), and 120-140 (VSFWQLADLVAPSLILGQAIG). Position 141 (R141) interacts with a 1,2-diacyl-sn-glycero-3-phospho-(1'-sn-glycerol). A run of 3 helical transmembrane segments spans residues 181 to 201 (TFLYESVWNLMVLGILLALFF), 209 to 229 (GTIFLVYAVTYSLGRLWIEGL), and 243 to 263 (QVVSLIGIGIGMLGLTWLYLL).

Belongs to the Lgt family.

Its subcellular location is the cell inner membrane. It catalyses the reaction L-cysteinyl-[prolipoprotein] + a 1,2-diacyl-sn-glycero-3-phospho-(1'-sn-glycerol) = an S-1,2-diacyl-sn-glyceryl-L-cysteinyl-[prolipoprotein] + sn-glycerol 1-phosphate + H(+). It participates in protein modification; lipoprotein biosynthesis (diacylglyceryl transfer). Its function is as follows. Catalyzes the transfer of the diacylglyceryl group from phosphatidylglycerol to the sulfhydryl group of the N-terminal cysteine of a prolipoprotein, the first step in the formation of mature lipoproteins. The chain is Phosphatidylglycerol--prolipoprotein diacylglyceryl transferase from Acaryochloris marina (strain MBIC 11017).